We begin with the raw amino-acid sequence, 194 residues long: MPDLQIGRVIKPHGVKGEVVVDPSTDHVPERFAIGEALRAVQTGKERQLTVTGMRRHQNRLLVTFEEIRDRDEAESLRGARFMAAPLHDDSDDGYYDHELIGLRVLNVGSVDADTANRRAYEGEQPEPVDIGEVTGVSHGPAGATLEVAVDADADLPTAGSTILIPFKLAIVPIVDLDNEALVVTPPEGLLELA.

The region spanning 92-190 is the PRC barrel domain; that stretch reads DDGYYDHELI…ALVVTPPEGL (99 aa).

It belongs to the RimM family. As to quaternary structure, binds ribosomal protein uS19.

The protein localises to the cytoplasm. An accessory protein needed during the final step in the assembly of 30S ribosomal subunit, possibly for assembly of the head region. Essential for efficient processing of 16S rRNA. May be needed both before and after RbfA during the maturation of 16S rRNA. It has affinity for free ribosomal 30S subunits but not for 70S ribosomes. This chain is Ribosome maturation factor RimM, found in Corynebacterium urealyticum (strain ATCC 43042 / DSM 7109).